Reading from the N-terminus, the 349-residue chain is tRNA N6-adenosine threonylcarbamoyltransferase (349 aa).

Fe cation is bound by residues His-117, His-121, and Tyr-138. Residues 138-142 (YVAGG), Asp-170, Asp-191, and Asn-271 each bind substrate. Asp-299 serves as a coordination point for Fe cation.

The protein belongs to the KAE1 / TsaD family. Requires Fe(2+) as cofactor.

It localises to the cytoplasm. It carries out the reaction L-threonylcarbamoyladenylate + adenosine(37) in tRNA = N(6)-L-threonylcarbamoyladenosine(37) in tRNA + AMP + H(+). In terms of biological role, required for the formation of a threonylcarbamoyl group on adenosine at position 37 (t(6)A37) in tRNAs that read codons beginning with adenine. Is probably involved in the transfer of the threonylcarbamoyl moiety of threonylcarbamoyl-AMP (TC-AMP) to the N6 group of A37. This chain is tRNA N6-adenosine threonylcarbamoyltransferase, found in Aeropyrum pernix (strain ATCC 700893 / DSM 11879 / JCM 9820 / NBRC 100138 / K1).